The following is a 432-amino-acid chain: Adenylosuccinate synthetase (432 aa).

GTP-binding positions include 13–19 (GDEGKGK) and 41–43 (GHT). D14 (proton acceptor) is an active-site residue. Mg(2+) is bound by residues D14 and G41. IMP-binding positions include 14–17 (DEGK), 39–42 (NAGH), T130, R144, Q225, T240, and R304. Residue H42 is the Proton donor of the active site. 300–306 (ATTGRRR) is a binding site for substrate. GTP contacts are provided by residues R306, 332–334 (KLD), and 415–417 (STG).

It belongs to the adenylosuccinate synthetase family. In terms of assembly, homodimer. Mg(2+) serves as cofactor.

The protein resides in the cytoplasm. The catalysed reaction is IMP + L-aspartate + GTP = N(6)-(1,2-dicarboxyethyl)-AMP + GDP + phosphate + 2 H(+). Its pathway is purine metabolism; AMP biosynthesis via de novo pathway; AMP from IMP: step 1/2. Its function is as follows. Plays an important role in the de novo pathway of purine nucleotide biosynthesis. Catalyzes the first committed step in the biosynthesis of AMP from IMP. In Shigella sonnei (strain Ss046), this protein is Adenylosuccinate synthetase.